Here is a 351-residue protein sequence, read N- to C-terminus: MKKELRYGYTTGSCATAAAKAATYMLFNDEILKSIKIDLPIGKEIELDIFYIERKEGEVICGVRKDAGDDPDVTHNMIIYAKAEKSKEFLITGGEGIGVVTKKGLPLQVGDYAINPVPRKMIESEVKKVLPEGKNVKITIFAPEGKYIAKRTLNPKLGIIGGISILGTTGIVEPLSDEAYKKTIDLEISMASSESNEICLVFGNYGKNFTTLSSKMPLVTMGNYVGFALESACKHRIKKVYLVGQIGKMIKVAGGIFNTYSYIADARNEIFTAYLSLYGLDRGILEKVMSANTTEEILDLIEGKVGKDFFENLALRIKEKCTQYVKGCLEVEVEIFSLKKGHLAKTWSDFK.

Belongs to the CbiD family.

The enzyme catalyses Co-precorrin-5B + S-adenosyl-L-methionine = Co-precorrin-6A + S-adenosyl-L-homocysteine. Its pathway is cofactor biosynthesis; adenosylcobalamin biosynthesis; cob(II)yrinate a,c-diamide from sirohydrochlorin (anaerobic route): step 6/10. Functionally, catalyzes the methylation of C-1 in cobalt-precorrin-5B to form cobalt-precorrin-6A. The sequence is that of Cobalt-precorrin-5B C(1)-methyltransferase from Thermosipho africanus (strain TCF52B).